The primary structure comprises 473 residues: Proton-coupled folate transporter (473 aa).

The span at 1-20 shows a compositional bias: pro residues; it reads MAAPSDPPTAATPPAPPPPA. The disordered stretch occupies residues 1–21; the sequence is MAAPSDPPTAATPPAPPPPAR. Residues 1–29 are Cytoplasmic-facing; that stretch reads MAAPSDPPTAATPPAPPPPARRCLLAPSV. Residues 30–48 form a helical membrane-spanning segment; sequence EPLLFLATLALGLQVPLAT. The Extracellular portion of the chain corresponds to 49 to 90; the sequence is QYLWDRLGAERGYVGPNASSPHGCGNGSGAVDPLREEVEALV. 2 N-linked (GlcNAc...) asparagine glycosylation sites follow: asparagine 65 and asparagine 74. An intrachain disulfide couples cysteine 72 to cysteine 306. Residues 91 to 116 form a helical membrane-spanning segment; the sequence is AHWNLCINLGGFFVGLFSVTLFGPWS. Asparagine 98 serves as a coordination point for pemetrexed. Residues 117–120 lie on the Cytoplasmic side of the membrane; that stretch reads DSVG. The chain crosses the membrane as a helical span at residues 121–143; that stretch reads RRPVLVLPAVGMAVQAAVYLLVM. At 144–148 the chain is on the extracellular side; that stretch reads YLRLH. The chain crosses the membrane as a helical span at residues 149–162; sequence VAYLLLGRIISGLL. At 163–185 the chain is on the cytoplasmic side; sequence GDYNLILAGCFASVADSSNQRTR. H(+) is bound by residues aspartate 164 and glutamate 193. The helical transmembrane segment at 186 to 211 threads the bilayer; sequence TFRVAILEACLGVAGMVASVGGGQWR. Glutamate 193 is a binding site for pemetrexed. Residues 212–216 lie on the Extracellular side of the membrane; sequence KAEGY. The chain crosses the membrane as a helical span at residues 217–235; that stretch reads INPFWLVLAASLAAALYAA. The Cytoplasmic portion of the chain corresponds to 236–274; it reads LCLQETVKQRRAAKLLTLQHYKAVYKLYTAPEDLSSRRK. A helical transmembrane segment spans residues 275-297; it reads LALYSLAFFLLVTVHFGTKDLYV. H(+) is bound at residue histidine 289. At 298–310 the chain is on the extracellular side; the sequence is LYELGSPLCWASD. Residues 311 to 333 form a helical membrane-spanning segment; the sequence is LIGYGSAASYLAYLSSLGGLRLL. Tyrosine 323 provides a ligand contact to pemetrexed. At 334 to 339 the chain is on the cytoplasmic side; sequence QLCLED. A helical transmembrane segment spans residues 340–359; sequence TWVAEIGLISNIAGLVVISL. Over 360–363 the chain is Extracellular; sequence ATTT. A helical transmembrane segment spans residues 364 to 384; sequence PLMFTGYGIMFLSMAATPVIR. The Cytoplasmic segment spans residues 385–396; it reads AKLSKLVGETEQ. Residues 397–422 form a helical membrane-spanning segment; sequence GALFASVACVEGLCSLVATGVFNSLY. Pemetrexed is bound by residues glutamate 407 and serine 411. The Extracellular portion of the chain corresponds to 423-430; that stretch reads PSTLHFMR. Residues 431–449 form a helical membrane-spanning segment; that stretch reads GFPFLFGAILLLIPAAIMG. Over 450–473 the chain is Cytoplasmic; the sequence is WIEIQDSNLQYSHFSDASSSPADG.

It belongs to the major facilitator superfamily. SLC46A family. As to quaternary structure, monomer. As to expression, widely expressed, including brain, aorta, liver, kidney, spleen, small intestine, pancreas, ovary and testis.

It localises to the cell membrane. The protein resides in the apical cell membrane. It is found in the basolateral cell membrane. Its subcellular location is the endosome membrane. The protein localises to the cytoplasm. The enzyme catalyses folate(in) + H(+)(in) = folate(out) + H(+)(out). It catalyses the reaction (6S)-5-methyl-5,6,7,8-tetrahydrofolate(in) + H(+)(in) = (6S)-5-methyl-5,6,7,8-tetrahydrofolate(out) + H(+)(out). It carries out the reaction methotrexate(in) + H(+)(in) = methotrexate(out) + H(+)(out). The catalysed reaction is pemetrexed(in) + H(+)(in) = pemetrexed(out) + H(+)(out). Functionally, proton-coupled folate symporter that mediates folate absorption using an H(+) gradient as a driving force. Involved in the intestinal absorption of folates at the brush-border membrane of the proximal jejunum, and the transport from blood to cerebrospinal fluid across the choroid plexus. Functions at acidic pH via alternate outward- and inward-open conformation states. Protonation of residues in the outward open state primes the protein for transport. Binding of folate promotes breaking of salt bridge network and subsequent closure of the extracellular gate, leading to the inward-open state and release of protons and folate. Also able to transport antifolate drugs, such as methotrexate and pemetrexed. Also acts as a lower-affinity, pH-independent heme carrier protein and constitutes the main importer of heme in the intestine. Imports heme in the retina and retinal pigment epithelium, in neurons of the hippocampus, in hepatocytes and in the renal epithelial cells. The sequence is that of Proton-coupled folate transporter from Gallus gallus (Chicken).